The chain runs to 484 residues: Fork head protein homolog 1 (484 aa).

Residues 76-142 (VTIGRNTDSL…NGAKVNFRRI (67 aa)) form the FHA domain. Residues 302–393 (IKPPQSYASM…RRDFLNKWNA (92 aa)) constitute a DNA-binding region (fork-head).

In terms of assembly, interacts (via FHA domain) with ECM30, GLN3, URE2, MPH1 AND FDO1. Interacts with the origin recognition complex (ORC) composed of ORC1 to ORC6.

The protein resides in the nucleus. The protein localises to the cytoplasm. Its subcellular location is the cytosol. Transcription factor that regulates the expression of the CLB2 cluster of genes during the G2/M phase of the mitotic cell cycle. The CLB2 cluster of genes includes mitotic regulators such as CLB1, CLB2, CDC5 and CDC20 as well as SWI5 and ACE2, transcription factors required for the subsequent temporal wave of cell cycle regulated gene expression in the M/G1 phase interval. Involved in HMRa silencing. FKH1 and FKH2 associate with the coding regions of active genes and influence, in opposing ways, transcriptional elongation and termination, and coordinate early transcription elongation and pre-mRNA processing. Both FKH1 and FKH2 play a role as regulators of lifespan in collaboration with the anaphase-promoting complex (APC), likely through combined regulation of stress response, genomic stability, and cell cycle regulation. FKH1 and FKH2 function also in controlling yeast cell morphology by preventing preudohyphal growth. Acts as a rate-limiting replication origin activator via its interaction with the origin recognition complex (ORC). Plays a transcription-independent role in recombination donor preference during mating-type switching through binding to the recombination enhancer (RE), a 700-bp cis-acting element that controls recombination along the left arm of chromosome III. This is Fork head protein homolog 1 from Saccharomyces cerevisiae (strain ATCC 204508 / S288c) (Baker's yeast).